Here is a 295-residue protein sequence, read N- to C-terminus: Iron-sulfur cluster carrier protein (295 aa).

38-45 serves as a coordination point for ATP; sequence GKGGVGKS.

It belongs to the Mrp/NBP35 ATP-binding proteins family. In terms of assembly, homodimer.

Binds and transfers iron-sulfur (Fe-S) clusters to target apoproteins. Can hydrolyze ATP. This is Iron-sulfur cluster carrier protein from Pyrococcus horikoshii (strain ATCC 700860 / DSM 12428 / JCM 9974 / NBRC 100139 / OT-3).